Consider the following 383-residue polypeptide: Vesicle-associated membrane protein-associated protein scs2 (383 aa).

The MSP domain maps to 1–123 (MSVECSGELF…SIFDRKIRCV (123 aa)). At 1-362 (MSVECSGELF…TGASLTESPG (362 aa)) the chain is on the cytoplasmic side. Polar residues predominate over residues 127–146 (KQPPQSADKQVENTSTSNPP). Disordered stretches follow at residues 127–160 (KQPP…SSVG) and 233–359 (ESAS…SLTE). Phosphoserine is present on residues Ser-236, Ser-237, Ser-259, Ser-261, and Ser-268. The segment covering 241–263 (DVARSKVQDIIDNEIPKPSESPR) has biased composition (basic and acidic residues). Positions 289–300 (FDTKKNDFDSKL) are enriched in basic and acidic residues. The segment covering 347–359 (ADPSSSTGASLTE) has biased composition (polar residues). The chain crosses the membrane as a helical; Anchor for type IV membrane protein span at residues 363–383 (IPPNIVIILCLIFFLIGYLFF).

It belongs to the VAMP-associated protein (VAP) (TC 9.B.17) family. Interacts (via MSP domain) with duc1 (via FFAT-motif); the interaction is direct and serves to restrict the localization of duc1 to areas of cell membrane-endoplasmic reticulum contact sites, and away from the cell division site. Interacts with epr1.

The protein resides in the endoplasmic reticulum membrane. In terms of biological role, vesicle-associated membrane protein-associated protein (VAP) implicated in maintaining the cortical endoplasmic reticulum (ER)-plasma membrane (PM) attachment. ER-PM contacts function to modulate the distribution of contractile ring components to ensure robust ring assembly. ER-PM contacts function also in controlling exocytosis and maintenance of cell polarity regulating cell shape. VAPs play an important role in regulating eisosome assembly. VAPs also contribute to ER-phagy by tethering atg8 to the ER membrane, but also by maintaining the ER-plasma membrane contact. Restricts the localization of duc1 away from the site of cell division. This Schizosaccharomyces pombe (strain 972 / ATCC 24843) (Fission yeast) protein is Vesicle-associated membrane protein-associated protein scs2 (scs2).